The following is a 926-amino-acid chain: Probable Xaa-Pro aminopeptidase PTT_10145 (926 aa).

Asp-274, Asp-285, Glu-435, and Glu-476 together coordinate Mn(2+). Disordered regions lie at residues 505–538 (GNPG…PGIS), 595–615 (KRDS…LSPV), 668–696 (SSST…EEKH), 711–741 (IGQS…KAAT), and 865–926 (MPVL…FLTR). The segment covering 506–515 (NPGTTEILNP) has biased composition (polar residues). Basic and acidic residues-rich tracts occupy residues 685–696 (SRQKSHTVEEKH) and 719–730 (GPEERRRKAQSD). The segment covering 887 to 897 (NNATNKRSMID) has biased composition (polar residues). Residues 900–915 (PAERRTRPERPERPAR) show a composition bias toward basic and acidic residues.

This sequence belongs to the peptidase M24B family. Requires Mn(2+) as cofactor.

The catalysed reaction is Release of any N-terminal amino acid, including proline, that is linked to proline, even from a dipeptide or tripeptide.. In terms of biological role, catalyzes the removal of a penultimate prolyl residue from the N-termini of peptides. This chain is Probable Xaa-Pro aminopeptidase PTT_10145, found in Pyrenophora teres f. teres (strain 0-1) (Barley net blotch fungus).